Reading from the N-terminus, the 130-residue chain is Small ribosomal subunit protein uS9 (130 aa).

Belongs to the universal ribosomal protein uS9 family.

The sequence is that of Small ribosomal subunit protein uS9 from Teredinibacter turnerae (strain ATCC 39867 / T7901).